The chain runs to 386 residues: Protein-glutamate methylesterase/protein-glutamine glutaminase 3 (386 aa).

Residues Lys-4–Leu-121 enclose the Response regulatory domain. Asp-55 is modified (4-aspartylphosphate). Positions Ser-132–Ser-194 are enriched in low complexity. The disordered stretch occupies residues Ser-132 to Ala-197. Residues Pro-191–Glu-383 form the CheB-type methylesterase domain. Catalysis depends on residues Ser-210, His-237, and Asp-330.

Belongs to the CheB family. In terms of processing, phosphorylated by CheA. Phosphorylation of the N-terminal regulatory domain activates the methylesterase activity.

The protein localises to the cytoplasm. The enzyme catalyses [protein]-L-glutamate 5-O-methyl ester + H2O = L-glutamyl-[protein] + methanol + H(+). It catalyses the reaction L-glutaminyl-[protein] + H2O = L-glutamyl-[protein] + NH4(+). Functionally, involved in chemotaxis. Part of a chemotaxis signal transduction system that modulates chemotaxis in response to various stimuli. Catalyzes the demethylation of specific methylglutamate residues introduced into the chemoreceptors (methyl-accepting chemotaxis proteins or MCP) by CheR. Also mediates the irreversible deamidation of specific glutamine residues to glutamic acid. The sequence is that of Protein-glutamate methylesterase/protein-glutamine glutaminase 3 from Pseudomonas syringae pv. syringae (strain B728a).